The primary structure comprises 356 residues: Photosystem II protein D1 4 (356 aa).

The next 3 membrane-spanning stretches (helical) occupy residues 32–49, 121–136, and 145–159; these read YIGWFGVLSIPTLLAATT, HFLIGIWCLLGRFWEL, and WIAVAYSAPVIAATS. Residue His-121 coordinates chlorophyll a. The [CaMn4O5] cluster site is built by Asp-173 and Asp-192. The helical transmembrane segment at 200–221 threads the bilayer; the sequence is FHMLGVAGVFGGALLSSLHGSL. His-201 is a chlorophyll a binding site. His-218 serves as a coordination point for a quinone. 2 residues coordinate Fe cation: His-218 and His-276. The chain crosses the membrane as a helical span at residues 278–292; sequence LLAALPTIGIWFAAM. Position 336 (His-336) interacts with [CaMn4O5] cluster.

The protein belongs to the reaction center PufL/M/PsbA/D family. In terms of assembly, PSII is composed of 1 copy each of membrane proteins PsbA, PsbB, PsbC, PsbD, PsbE, PsbF, PsbH, PsbI, PsbJ, PsbK, PsbL, PsbM, PsbT, PsbX, PsbY, PsbZ, Psb30/Ycf12, peripheral proteins PsbO, CyanoQ (PsbQ), PsbU, PsbV and a large number of cofactors. It forms dimeric complexes. The D1/D2 heterodimer binds P680, chlorophylls that are the primary electron donor of PSII, and subsequent electron acceptors. It shares a non-heme iron and each subunit binds pheophytin, quinone, additional chlorophylls, carotenoids and lipids. D1 provides most of the ligands for the Mn4-Ca-O5 cluster of the oxygen-evolving complex (OEC). There is also a Cl(-1) ion associated with D1 and D2, which is required for oxygen evolution. The PSII complex binds additional chlorophylls, carotenoids and specific lipids. serves as cofactor. Tyr-164 forms a radical intermediate that is referred to as redox-active TyrZ, YZ or Y-Z.

The protein localises to the cellular thylakoid membrane. It carries out the reaction 2 a plastoquinone + 4 hnu + 2 H2O = 2 a plastoquinol + O2. Photosystem II (PSII) is a light-driven water:plastoquinone oxidoreductase that uses light energy to abstract electrons from H(2)O, generating O(2) and a proton gradient subsequently used for ATP formation. It consists of a core antenna complex that captures photons, and an electron transfer chain that converts photonic excitation into a charge separation. The D1/D2 (PsbA/PsbD) reaction center heterodimer binds P680, the primary electron donor of PSII as well as several subsequent electron acceptors. The sequence is that of Photosystem II protein D1 4 from Trichormus variabilis (strain ATCC 29413 / PCC 7937) (Anabaena variabilis).